We begin with the raw amino-acid sequence, 282 residues long: HTH-type transcriptional activator RhaR (282 aa).

The region spanning 179–277 is the HTH araC/xylS-type domain; it reads DKLITALANS…GMTPSQWRHL (99 aa). DNA-binding regions (H-T-H motif) lie at residues 196-217 and 244-267; these read DAFC…RAQT and ISEI…TRET.

In terms of assembly, binds DNA as a dimer.

The protein localises to the cytoplasm. In terms of biological role, activates expression of the rhaSR operon in response to L-rhamnose. This is HTH-type transcriptional activator RhaR from Salmonella typhimurium (strain LT2 / SGSC1412 / ATCC 700720).